The following is a 234-amino-acid chain: 7-cyano-7-deazaguanine synthase (234 aa).

15–25 (LSGGLDSSTCL) is a binding site for ATP. Residues Cys-199, Cys-208, Cys-211, and Cys-214 each coordinate Zn(2+).

This sequence belongs to the QueC family. Zn(2+) is required as a cofactor.

It catalyses the reaction 7-carboxy-7-deazaguanine + NH4(+) + ATP = 7-cyano-7-deazaguanine + ADP + phosphate + H2O + H(+). It functions in the pathway purine metabolism; 7-cyano-7-deazaguanine biosynthesis. Catalyzes the ATP-dependent conversion of 7-carboxy-7-deazaguanine (CDG) to 7-cyano-7-deazaguanine (preQ(0)). The chain is 7-cyano-7-deazaguanine synthase from Anaeromyxobacter dehalogenans (strain 2CP-C).